The sequence spans 368 residues: tRNA-specific 2-thiouridylase MnmA (368 aa).

ATP-binding positions include 11-18 (GMSGGVDS) and Met37. Positions 97-99 (NPD) are interaction with target base in tRNA. The active-site Nucleophile is the Cys102. Cysteines 102 and 199 form a disulfide. Gly127 lines the ATP pocket. Positions 149–151 (KDQ) are interaction with tRNA. The active-site Cysteine persulfide intermediate is the Cys199. An interaction with tRNA region spans residues 311-312 (RY).

This sequence belongs to the MnmA/TRMU family. As to quaternary structure, interacts with TusE.

The protein resides in the cytoplasm. It catalyses the reaction S-sulfanyl-L-cysteinyl-[protein] + uridine(34) in tRNA + AH2 + ATP = 2-thiouridine(34) in tRNA + L-cysteinyl-[protein] + A + AMP + diphosphate + H(+). In terms of biological role, catalyzes the 2-thiolation of uridine at the wobble position (U34) of tRNA(Lys), tRNA(Glu) and tRNA(Gln), leading to the formation of s(2)U34, the first step of tRNA-mnm(5)s(2)U34 synthesis. Sulfur is provided by IscS, via a sulfur-relay system. Binds ATP and its substrate tRNAs. In Klebsiella pneumoniae (strain 342), this protein is tRNA-specific 2-thiouridylase MnmA.